Consider the following 193-residue polypeptide: MSSDSANRDLAPLIALMETEALQRGEFTLASGKKANYYLDCRRVTLHPKGACLIGRAMLDVVLANAKESGVMPAAVGGMAIGADPITASIVTLAGGDDVDLKGFMVRKEPKGHGMGQQVEGPVTPGQKVVIVEDVITSGGSALKAVEAVQAFGLEVQYVLAIIDRLAGGAEAFAQKGLELKTLTTIRDFGLEP.

5-phospho-alpha-D-ribose 1-diphosphate is bound by residues R107, K108, K111, H113, and 133–141 (EDVITSGGS). Orotate-binding residues include T137 and R165.

This sequence belongs to the purine/pyrimidine phosphoribosyltransferase family. PyrE subfamily. In terms of assembly, homodimer. Mg(2+) is required as a cofactor.

The catalysed reaction is orotidine 5'-phosphate + diphosphate = orotate + 5-phospho-alpha-D-ribose 1-diphosphate. It functions in the pathway pyrimidine metabolism; UMP biosynthesis via de novo pathway; UMP from orotate: step 1/2. Catalyzes the transfer of a ribosyl phosphate group from 5-phosphoribose 1-diphosphate to orotate, leading to the formation of orotidine monophosphate (OMP). This chain is Orotate phosphoribosyltransferase, found in Rhodopirellula baltica (strain DSM 10527 / NCIMB 13988 / SH1).